We begin with the raw amino-acid sequence, 416 residues long: 4-hydroxy-3-methylbut-2-en-1-yl diphosphate synthase (flavodoxin) (416 aa).

Positions 304, 307, 350, and 357 each coordinate [4Fe-4S] cluster.

This sequence belongs to the IspG family. [4Fe-4S] cluster serves as cofactor.

The catalysed reaction is (2E)-4-hydroxy-3-methylbut-2-enyl diphosphate + oxidized [flavodoxin] + H2O + 2 H(+) = 2-C-methyl-D-erythritol 2,4-cyclic diphosphate + reduced [flavodoxin]. The protein operates within isoprenoid biosynthesis; isopentenyl diphosphate biosynthesis via DXP pathway; isopentenyl diphosphate from 1-deoxy-D-xylulose 5-phosphate: step 5/6. Its function is as follows. Converts 2C-methyl-D-erythritol 2,4-cyclodiphosphate (ME-2,4cPP) into 1-hydroxy-2-methyl-2-(E)-butenyl 4-diphosphate. This chain is 4-hydroxy-3-methylbut-2-en-1-yl diphosphate synthase (flavodoxin), found in Allorhizobium ampelinum (strain ATCC BAA-846 / DSM 112012 / S4) (Agrobacterium vitis (strain S4)).